Here is a 119-residue protein sequence, read N- to C-terminus: uncharacterized protein (119 aa).

The disordered stretch occupies residues 1 to 22 (MQGQAGKRKTDGKVPSNTEQNC).

This is an uncharacterized protein from Saccharomyces cerevisiae (strain ATCC 204508 / S288c) (Baker's yeast).